The primary structure comprises 100 residues: Putative protein BCL8 (100 aa).

As to expression, expressed in prostate and testis.

The sequence is that of Putative protein BCL8 (NBEAP1) from Homo sapiens (Human).